A 132-amino-acid polypeptide reads, in one-letter code: Aspartate 1-decarboxylase (132 aa).

Ser-25 (schiff-base intermediate with substrate; via pyruvic acid) is an active-site residue. Ser-25 carries the post-translational modification Pyruvic acid (Ser). Thr-57 serves as a coordination point for substrate. The active-site Proton donor is Tyr-58. 73–75 lines the substrate pocket; that stretch reads GAA.

This sequence belongs to the PanD family. As to quaternary structure, heterooctamer of four alpha and four beta subunits. It depends on pyruvate as a cofactor. In terms of processing, is synthesized initially as an inactive proenzyme, which is activated by self-cleavage at a specific serine bond to produce a beta-subunit with a hydroxyl group at its C-terminus and an alpha-subunit with a pyruvoyl group at its N-terminus.

The protein localises to the cytoplasm. The catalysed reaction is L-aspartate + H(+) = beta-alanine + CO2. It participates in cofactor biosynthesis; (R)-pantothenate biosynthesis; beta-alanine from L-aspartate: step 1/1. Functionally, catalyzes the pyruvoyl-dependent decarboxylation of aspartate to produce beta-alanine. The chain is Aspartate 1-decarboxylase from Pelotomaculum thermopropionicum (strain DSM 13744 / JCM 10971 / SI).